We begin with the raw amino-acid sequence, 335 residues long: tRNA-dihydrouridine(20/20a) synthase (335 aa).

Residues 19 to 21 (PMM) and Gln-72 each bind FMN. The Proton donor role is filled by Cys-102. Residues Lys-141, His-173, 213–215 (NGG), and 235–236 (GR) contribute to the FMN site.

It belongs to the Dus family. DusA subfamily. FMN is required as a cofactor.

The enzyme catalyses 5,6-dihydrouridine(20) in tRNA + NADP(+) = uridine(20) in tRNA + NADPH + H(+). It carries out the reaction 5,6-dihydrouridine(20) in tRNA + NAD(+) = uridine(20) in tRNA + NADH + H(+). The catalysed reaction is 5,6-dihydrouridine(20a) in tRNA + NADP(+) = uridine(20a) in tRNA + NADPH + H(+). It catalyses the reaction 5,6-dihydrouridine(20a) in tRNA + NAD(+) = uridine(20a) in tRNA + NADH + H(+). In terms of biological role, catalyzes the synthesis of 5,6-dihydrouridine (D), a modified base found in the D-loop of most tRNAs, via the reduction of the C5-C6 double bond in target uridines. Specifically modifies U20 and U20a in tRNAs. In Xanthomonas campestris pv. campestris (strain ATCC 33913 / DSM 3586 / NCPPB 528 / LMG 568 / P 25), this protein is tRNA-dihydrouridine(20/20a) synthase.